A 274-amino-acid polypeptide reads, in one-letter code: Ribosomal RNA small subunit methyltransferase A (274 aa).

S-adenosyl-L-methionine is bound by residues histidine 15, leucine 17, glycine 42, glutamate 64, aspartate 89, and asparagine 108.

This sequence belongs to the class I-like SAM-binding methyltransferase superfamily. rRNA adenine N(6)-methyltransferase family. RsmA subfamily.

Its subcellular location is the cytoplasm. It catalyses the reaction adenosine(1518)/adenosine(1519) in 16S rRNA + 4 S-adenosyl-L-methionine = N(6)-dimethyladenosine(1518)/N(6)-dimethyladenosine(1519) in 16S rRNA + 4 S-adenosyl-L-homocysteine + 4 H(+). Its function is as follows. Specifically dimethylates two adjacent adenosines (A1518 and A1519) in the loop of a conserved hairpin near the 3'-end of 16S rRNA in the 30S particle. May play a critical role in biogenesis of 30S subunits. In Prochlorococcus marinus (strain MIT 9301), this protein is Ribosomal RNA small subunit methyltransferase A.